A 118-amino-acid chain; its full sequence is Late cornified envelope protein 1B (118 aa).

The tract at residues 87-118 (CHRPQSSGCCSQPSGGSSCCGGGSGQHSGGCC) is disordered. Positions 90–103 (PQSSGCCSQPSGGS) are enriched in low complexity. A compositionally biased stretch (gly residues) spans 104-118 (SCCGGGSGQHSGGCC).

It belongs to the LCE family. In terms of assembly, interacts with CYSRT1; the interaction is direct. Skin-specific. Expression was readily detected in adult trunk skin, adult arm skin, fetal skin, penal skin, vulva, esophagus and tongue. Not expressed in the cervix, rectum, lung, colon, or placenta.

Its function is as follows. Precursors of the cornified envelope of the stratum corneum. This chain is Late cornified envelope protein 1B (LCE1B), found in Homo sapiens (Human).